Consider the following 336-residue polypeptide: tRNA N6-adenosine threonylcarbamoyltransferase (336 aa).

2 residues coordinate Fe cation: histidine 114 and histidine 118. Residues leucine 136–glycine 140, aspartate 169, glycine 182, aspartate 186, and asparagine 275 each bind substrate. Aspartate 301 serves as a coordination point for Fe cation.

The protein belongs to the KAE1 / TsaD family. It depends on Fe(2+) as a cofactor.

It localises to the cytoplasm. The catalysed reaction is L-threonylcarbamoyladenylate + adenosine(37) in tRNA = N(6)-L-threonylcarbamoyladenosine(37) in tRNA + AMP + H(+). Required for the formation of a threonylcarbamoyl group on adenosine at position 37 (t(6)A37) in tRNAs that read codons beginning with adenine. Is involved in the transfer of the threonylcarbamoyl moiety of threonylcarbamoyl-AMP (TC-AMP) to the N6 group of A37, together with TsaE and TsaB. TsaD likely plays a direct catalytic role in this reaction. This chain is tRNA N6-adenosine threonylcarbamoyltransferase, found in Streptococcus pneumoniae (strain Hungary19A-6).